A 114-amino-acid polypeptide reads, in one-letter code: MKKRNINIKSRLEIQELFKKGQFVKIEGINIFYRFTSLAISRILITFPRVFKGAVKRNRVRRVFKECFREYFTLLKDGCADFIFVVYPQKANINYHEVKTILKNMIVYVIKRKV.

It belongs to the RnpA family. Consists of a catalytic RNA component (M1 or rnpB) and a protein subunit.

It catalyses the reaction Endonucleolytic cleavage of RNA, removing 5'-extranucleotides from tRNA precursor.. Functionally, RNaseP catalyzes the removal of the 5'-leader sequence from pre-tRNA to produce the mature 5'-terminus. It can also cleave other RNA substrates such as 4.5S RNA. The protein component plays an auxiliary but essential role in vivo by binding to the 5'-leader sequence and broadening the substrate specificity of the ribozyme. This Borrelia duttonii (strain Ly) protein is Ribonuclease P protein component.